The following is a 311-amino-acid chain: Probable 5-dehydro-4-deoxyglucarate dehydratase (311 aa).

It belongs to the DapA family.

It carries out the reaction 5-dehydro-4-deoxy-D-glucarate + H(+) = 2,5-dioxopentanoate + CO2 + H2O. It functions in the pathway carbohydrate acid metabolism; D-glucarate degradation; 2,5-dioxopentanoate from D-glucarate: step 2/2. The sequence is that of Probable 5-dehydro-4-deoxyglucarate dehydratase from Ralstonia nicotianae (strain ATCC BAA-1114 / GMI1000) (Ralstonia solanacearum).